Here is a 427-residue protein sequence, read N- to C-terminus: Serine--tRNA ligase (427 aa).

233–235 provides a ligand contact to L-serine; it reads TAE. Residue 264–266 coordinates ATP; sequence RSE. Glutamate 287 contributes to the L-serine binding site. 351-354 is an ATP binding site; sequence EISS. Serine 386 is a binding site for L-serine.

The protein belongs to the class-II aminoacyl-tRNA synthetase family. Type-1 seryl-tRNA synthetase subfamily. In terms of assembly, homodimer. The tRNA molecule binds across the dimer.

Its subcellular location is the cytoplasm. It carries out the reaction tRNA(Ser) + L-serine + ATP = L-seryl-tRNA(Ser) + AMP + diphosphate + H(+). The enzyme catalyses tRNA(Sec) + L-serine + ATP = L-seryl-tRNA(Sec) + AMP + diphosphate + H(+). Its pathway is aminoacyl-tRNA biosynthesis; selenocysteinyl-tRNA(Sec) biosynthesis; L-seryl-tRNA(Sec) from L-serine and tRNA(Sec): step 1/1. In terms of biological role, catalyzes the attachment of serine to tRNA(Ser). Is also able to aminoacylate tRNA(Sec) with serine, to form the misacylated tRNA L-seryl-tRNA(Sec), which will be further converted into selenocysteinyl-tRNA(Sec). This is Serine--tRNA ligase from Dechloromonas aromatica (strain RCB).